Reading from the N-terminus, the 159-residue chain is Serine-protein kinase RsbW (159 aa).

Belongs to the anti-sigma-factor family.

The enzyme catalyses L-seryl-[protein] + ATP = O-phospho-L-seryl-[protein] + ADP + H(+). It carries out the reaction L-threonyl-[protein] + ATP = O-phospho-L-threonyl-[protein] + ADP + H(+). Its function is as follows. Negative regulator of sigma-B activity. Phosphorylates and inactivates its specific antagonist protein, RsbV. Upon phosphorylation of RsbV, RsbW is released and binds to sigma-B, thereby blocking its ability to form an RNA polymerase holoenzyme (E-sigma-B). This is Serine-protein kinase RsbW from Staphylococcus aureus (strain Newman).